The following is a 382-amino-acid chain: Nitric oxide reductase FlRd-NAD(+) reductase (382 aa).

It belongs to the FAD-dependent oxidoreductase family. Requires FAD as cofactor.

It localises to the cytoplasm. The enzyme catalyses 2 reduced [nitric oxide reductase rubredoxin domain] + NAD(+) + H(+) = 2 oxidized [nitric oxide reductase rubredoxin domain] + NADH. The protein operates within nitrogen metabolism; nitric oxide reduction. In terms of biological role, one of at least two accessory proteins for anaerobic nitric oxide (NO) reductase. Reduces the rubredoxin moiety of NO reductase. This chain is Nitric oxide reductase FlRd-NAD(+) reductase, found in Vibrio vulnificus (strain CMCP6).